A 681-amino-acid chain; its full sequence is RNA polymerase sigma factor RpoD (681 aa).

2 disordered regions span residues 1-60 (MKKK…ETAK) and 239-270 (DDDE…VSEK). The segment covering 261–270 (EERKKVVSEK) has biased composition (basic and acidic residues). The interval 446-516 (MAKSNLRLVV…SRAIADQART (71 aa)) is sigma-70 factor domain-2. The short motif at 470 to 473 (DLIQ) is the Interaction with polymerase core subunit RpoC element. Residues 525 to 601 (DTINRINKVM…DKNIVSSIDH (77 aa)) form a sigma-70 factor domain-3 region. The segment at 614–668 (VLDQLNEREKAVIRMRFGLLDDESDRTLEEIGKELNVTRERVRQIESSAIKKLRS) is sigma-70 factor domain-4. The H-T-H motif DNA-binding region spans 641 to 660 (LEEIGKELNVTRERVRQIES).

Belongs to the sigma-70 factor family. RpoD/SigA subfamily. Interacts transiently with the RNA polymerase catalytic core.

It localises to the cytoplasm. In terms of biological role, sigma factors are initiation factors that promote the attachment of RNA polymerase to specific initiation sites and are then released. This sigma factor is the primary sigma factor during exponential growth. The sequence is that of RNA polymerase sigma factor RpoD from Helicobacter pylori (strain J99 / ATCC 700824) (Campylobacter pylori J99).